Consider the following 701-residue polypeptide: ER-retained PMA1-suppressing protein 1 (701 aa).

Residues 1–27 form the signal peptide; the sequence is MKMNLKRLVVTFFSCITFLLKFTIAAA. The Thioredoxin 1 domain occupies 28-142; that stretch reads EPPEGFPEPL…LIAFARRESM (115 aa). Cysteines 60 and 63 form a disulfide. A glycan (N-linked (GlcNAc...) asparagine) is linked at Asn-85. Cysteines 200 and 203 form a disulfide. Asn-264, Asn-299, and Asn-370 each carry an N-linked (GlcNAc...) asparagine glycan. A Thioredoxin 2 domain is found at 408–446; it reads PTFFMFKDGDPISYVFPGYSTTEMRNIDAIMDWVKKYSN. A helical membrane pass occupies residues 646 to 666; the sequence is IIHGNGMPGYLIVIVLFIAIL.

Belongs to the protein disulfide isomerase family. In terms of assembly, interacts with mutated PMA1-D378N but not wild type PMA1. Interacts with EUG1, KAR2, MPD1 and PDI1.

It localises to the endoplasmic reticulum membrane. The enzyme catalyses Catalyzes the rearrangement of -S-S- bonds in proteins.. Acts as a membrane-bound chaperone in endoplasmic reticulum quality control. Probably facilitates presentation of substrate to membrane-bound components of the degradation machinery. The polypeptide is ER-retained PMA1-suppressing protein 1 (EPS1) (Saccharomyces cerevisiae (strain ATCC 204508 / S288c) (Baker's yeast)).